The following is an 86-amino-acid chain: Progonadoliberin-2 (86 aa).

The signal sequence occupies residues 1–24 (MVSVARLVFMLGPLLCLGAQLSSS). Q25 is subject to Pyrrolidone carboxylic acid. Position 34 is a glycine amide (G34).

This sequence belongs to the GnRH family.

The protein localises to the secreted. Functionally, stimulates the secretion of gonadotropins. The sequence is that of Progonadoliberin-2 (gnrh2) from Oncorhynchus mykiss (Rainbow trout).